A 70-amino-acid polypeptide reads, in one-letter code: Cytochrome c oxidase subunit 8B, mitochondrial (70 aa).

Residues 1–24 (MLSLRPALRLLQAPLRCWAVPKAH) constitute a mitochondrion transit peptide. Residues 25-35 (VSAKPAETPTS) are Mitochondrial matrix-facing. Residues 36-59 (PAEQAVGLSFIFITFLGPAGWILS) traverse the membrane as a helical segment. The Mitochondrial intermembrane portion of the chain corresponds to 60–70 (HVENYKKRPRA).

Belongs to the cytochrome c oxidase VIII family. In terms of assembly, component of the cytochrome c oxidase (complex IV, CIV), a multisubunit enzyme composed of 14 subunits. The complex is composed of a catalytic core of 3 subunits MT-CO1, MT-CO2 and MT-CO3, encoded in the mitochondrial DNA, and 11 supernumerary subunits COX4I, COX5A, COX5B, COX6A, COX6B, COX6C, COX7A, COX7B, COX7C, COX8 and NDUFA4, which are encoded in the nuclear genome. The complex exists as a monomer or a dimer and forms supercomplexes (SCs) in the inner mitochondrial membrane with NADH-ubiquinone oxidoreductase (complex I, CI) and ubiquinol-cytochrome c oxidoreductase (cytochrome b-c1 complex, complex III, CIII), resulting in different assemblies (supercomplex SCI(1)III(2)IV(1) and megacomplex MCI(2)III(2)IV(2)).

It is found in the mitochondrion inner membrane. It participates in energy metabolism; oxidative phosphorylation. Its function is as follows. Component of the cytochrome c oxidase, the last enzyme in the mitochondrial electron transport chain which drives oxidative phosphorylation. The respiratory chain contains 3 multisubunit complexes succinate dehydrogenase (complex II, CII), ubiquinol-cytochrome c oxidoreductase (cytochrome b-c1 complex, complex III, CIII) and cytochrome c oxidase (complex IV, CIV), that cooperate to transfer electrons derived from NADH and succinate to molecular oxygen, creating an electrochemical gradient over the inner membrane that drives transmembrane transport and the ATP synthase. Cytochrome c oxidase is the component of the respiratory chain that catalyzes the reduction of oxygen to water. Electrons originating from reduced cytochrome c in the intermembrane space (IMS) are transferred via the dinuclear copper A center (CU(A)) of subunit 2 and heme A of subunit 1 to the active site in subunit 1, a binuclear center (BNC) formed by heme A3 and copper B (CU(B)). The BNC reduces molecular oxygen to 2 water molecules using 4 electrons from cytochrome c in the IMS and 4 protons from the mitochondrial matrix. This chain is Cytochrome c oxidase subunit 8B, mitochondrial (COX8B), found in Ateles belzebuth (White-bellied spider monkey).